Reading from the N-terminus, the 260-residue chain is Diphthine synthase (260 aa).

Residues L9, D85, I88, 113–114, L168, A202, and H227 each bind S-adenosyl-L-methionine; that span reads TA.

The protein belongs to the diphthine synthase family. As to quaternary structure, homodimer.

The enzyme catalyses 2-[(3S)-amino-3-carboxypropyl]-L-histidyl-[translation elongation factor 2] + 3 S-adenosyl-L-methionine = diphthine-[translation elongation factor 2] + 3 S-adenosyl-L-homocysteine + 3 H(+). The protein operates within protein modification; peptidyl-diphthamide biosynthesis. Its function is as follows. S-adenosyl-L-methionine-dependent methyltransferase that catalyzes the trimethylation of the amino group of the modified target histidine residue in translation elongation factor 2 (EF-2), to form an intermediate called diphthine. The three successive methylation reactions represent the second step of diphthamide biosynthesis. The sequence is that of Diphthine synthase from Haloquadratum walsbyi (strain DSM 16790 / HBSQ001).